The following is a 401-amino-acid chain: GRIP domain-containing protein C119.12 (401 aa).

Positions 7-296 form a coiled coil; the sequence is NETKLVENEN…TLLIGKLQHE (290 aa). The 52-residue stretch at 315 to 366 folds into the GRIP domain; the sequence is NNAEKIDKQLISNLFVSFLTLPRADTKRFEILQLISSVLDWNDTQREQTGLQ.

It localises to the golgi apparatus lumen. The polypeptide is GRIP domain-containing protein C119.12 (Schizosaccharomyces pombe (strain 972 / ATCC 24843) (Fission yeast)).